The following is a 55-amino-acid chain: ATP synthase protein 8 (55 aa).

A helical membrane pass occupies residues 4-24 (LNPNPWFTILIFTWAVFLTIL).

It belongs to the ATPase protein 8 family. As to quaternary structure, F-type ATPases have 2 components, CF(1) - the catalytic core - and CF(0) - the membrane proton channel.

The protein resides in the mitochondrion membrane. Its function is as follows. Mitochondrial membrane ATP synthase (F(1)F(0) ATP synthase or Complex V) produces ATP from ADP in the presence of a proton gradient across the membrane which is generated by electron transport complexes of the respiratory chain. F-type ATPases consist of two structural domains, F(1) - containing the extramembraneous catalytic core and F(0) - containing the membrane proton channel, linked together by a central stalk and a peripheral stalk. During catalysis, ATP synthesis in the catalytic domain of F(1) is coupled via a rotary mechanism of the central stalk subunits to proton translocation. Part of the complex F(0) domain. Minor subunit located with subunit a in the membrane. The sequence is that of ATP synthase protein 8 (mt-atp8) from Polypterus ornatipinnis (Ornate bichir).